Consider the following 357-residue polypeptide: Arginine kinase (357 aa).

Ala-2 carries the post-translational modification N-acetylalanine. The 83-residue stretch at 9–91 folds into the Phosphagen kinase N-terminal domain; it reads KLEEGFKKLE…FDPIIEDYHK (83 aa). 64 to 68 is an L-arginine binding site; the sequence is GVGVY. One can recognise a Phosphagen kinase C-terminal domain in the interval 119–356; the sequence is FVISTRVRCG…LELIKIEKEM (238 aa). ATP contacts are provided by residues 122-126 and His-185; that span reads STRVR. Residue Glu-225 coordinates L-arginine. Arg-229 serves as a coordination point for ATP. Cys-271 contacts L-arginine. ATP is bound by residues 280 to 284 and 309 to 314; these read RASVH and RGTRGE. Glu-314 lines the L-arginine pocket.

Belongs to the ATP:guanido phosphotransferase family.

The enzyme catalyses L-arginine + ATP = N(omega)-phospho-L-arginine + ADP + H(+). In Carcinus maenas (Common shore crab), this protein is Arginine kinase.